Consider the following 930-residue polypeptide: Probable SapB synthase (930 aa).

One can recognise a Protein kinase domain in the interval 256 to 516; it reads YTVESALHFS…GSTRADETTR (261 aa). ATP contacts are provided by residues 262 to 270 and Lys285; that span reads LHFSNGGGV. Catalysis depends on Asp395, which acts as the Proton acceptor. The helical transmembrane segment at 447-467 threads the bilayer; sequence YALACLRIVLFLPLTSLLAVD. The span at 501-527 shows a compositional bias: basic and acidic residues; that stretch reads GSTRVDGSTRADETTRADETTRLDVTT. 2 disordered regions span residues 501 to 558 and 911 to 930; these read GSTR…RDSM and PFLP…HQEP. Over residues 532 to 546 the composition is skewed to low complexity; sequence APDAARRPAGPVAPV. A compositionally biased stretch (basic and acidic residues) spans 547 to 556; that stretch reads RPDDWPRSRD.

It in the N-terminal section; belongs to the protein kinase superfamily.

The protein localises to the cell membrane. In terms of biological role, required for aerial hyphae formation. Probably involved in processing the precursor of SapB to its mature form. This Streptomyces coelicolor (strain ATCC BAA-471 / A3(2) / M145) protein is Probable SapB synthase.